The primary structure comprises 1079 residues: Error-prone DNA polymerase (1079 aa).

The protein belongs to the DNA polymerase type-C family. DnaE2 subfamily.

The protein resides in the cytoplasm. It carries out the reaction DNA(n) + a 2'-deoxyribonucleoside 5'-triphosphate = DNA(n+1) + diphosphate. Its function is as follows. DNA polymerase involved in damage-induced mutagenesis and translesion synthesis (TLS). It is not the major replicative DNA polymerase. This is Error-prone DNA polymerase from Ralstonia pickettii (strain 12J).